The primary structure comprises 209 residues: MKAVVQRVTRASVTVGGEQISAIGRGICVLLGISMEDSQKELEHMVRKILNLRVFEDESGKHWSKSVMDKEYEVLCVSQFTLQCVLKGNKPDFHLAMPTEQAESFYNSFLEQLRKSYRPELIRDGKFGAYMQVHIQNDGPVTIELESPAPGAASSDPKQLSKLEKQQQRKEKTRAKGPSESSKERNAPRKEDRSASSGAEGDVSSEREP.

The Gly-cisPro motif, important for rejection of L-amino acids motif lies at G139–P140. Residues T142–P209 are disordered. Basic and acidic residues-rich tracts occupy residues Q159 to K170 and S181 to S194. S197, S204, and S205 each carry phosphoserine.

The protein belongs to the DTD family. Homodimer. Interacts with CDC45 and TOPBP1. Preferentially phosphorylated in cells arrested early in S phase. Phosphorylation in the C-terminus weakens the interaction with CDC45.

The protein resides in the nucleus. It is found in the cytoplasm. It carries out the reaction glycyl-tRNA(Ala) + H2O = tRNA(Ala) + glycine + H(+). It catalyses the reaction a D-aminoacyl-tRNA + H2O = a tRNA + a D-alpha-amino acid + H(+). An aminoacyl-tRNA editing enzyme that deacylates mischarged D-aminoacyl-tRNAs. Also deacylates mischarged glycyl-tRNA(Ala), protecting cells against glycine mischarging by AlaRS. Acts via tRNA-based rather than protein-based catalysis; rejects L-amino acids rather than detecting D-amino acids in the active site. By recycling D-aminoacyl-tRNA to D-amino acids and free tRNA molecules, this enzyme counteracts the toxicity associated with the formation of D-aminoacyl-tRNA entities in vivo and helps enforce protein L-homochirality. Its function is as follows. ATPase involved in DNA replication, may facilitate loading of CDC45 onto pre-replication complexes. The polypeptide is D-aminoacyl-tRNA deacylase 1 (Dtd1) (Mus musculus (Mouse)).